A 316-amino-acid polypeptide reads, in one-letter code: 4-hydroxy-3-methylbut-2-enyl diphosphate reductase (316 aa).

Cys-12 contacts [4Fe-4S] cluster. 2 residues coordinate (2E)-4-hydroxy-3-methylbut-2-enyl diphosphate: His-41 and His-74. The dimethylallyl diphosphate site is built by His-41 and His-74. Isopentenyl diphosphate contacts are provided by His-41 and His-74. [4Fe-4S] cluster is bound at residue Cys-96. His-124 lines the (2E)-4-hydroxy-3-methylbut-2-enyl diphosphate pocket. His-124 contributes to the dimethylallyl diphosphate binding site. His-124 contacts isopentenyl diphosphate. The active-site Proton donor is the Glu-126. A (2E)-4-hydroxy-3-methylbut-2-enyl diphosphate-binding site is contributed by Thr-167. Cys-197 lines the [4Fe-4S] cluster pocket. The (2E)-4-hydroxy-3-methylbut-2-enyl diphosphate site is built by Ser-225, Ser-226, Asn-227, and Ser-269. Residues Ser-225, Ser-226, Asn-227, and Ser-269 each contribute to the dimethylallyl diphosphate site. Residues Ser-225, Ser-226, Asn-227, and Ser-269 each contribute to the isopentenyl diphosphate site.

The protein belongs to the IspH family. Homodimer. [4Fe-4S] cluster serves as cofactor.

The catalysed reaction is isopentenyl diphosphate + 2 oxidized [2Fe-2S]-[ferredoxin] + H2O = (2E)-4-hydroxy-3-methylbut-2-enyl diphosphate + 2 reduced [2Fe-2S]-[ferredoxin] + 2 H(+). It catalyses the reaction dimethylallyl diphosphate + 2 oxidized [2Fe-2S]-[ferredoxin] + H2O = (2E)-4-hydroxy-3-methylbut-2-enyl diphosphate + 2 reduced [2Fe-2S]-[ferredoxin] + 2 H(+). It participates in isoprenoid biosynthesis; dimethylallyl diphosphate biosynthesis; dimethylallyl diphosphate from (2E)-4-hydroxy-3-methylbutenyl diphosphate: step 1/1. It functions in the pathway isoprenoid biosynthesis; isopentenyl diphosphate biosynthesis via DXP pathway; isopentenyl diphosphate from 1-deoxy-D-xylulose 5-phosphate: step 6/6. Its function is as follows. Catalyzes the conversion of 1-hydroxy-2-methyl-2-(E)-butenyl 4-diphosphate (HMBPP) into a mixture of isopentenyl diphosphate (IPP) and dimethylallyl diphosphate (DMAPP). Acts in the terminal step of the DOXP/MEP pathway for isoprenoid precursor biosynthesis. In Salmonella paratyphi A (strain ATCC 9150 / SARB42), this protein is 4-hydroxy-3-methylbut-2-enyl diphosphate reductase.